Consider the following 644-residue polypeptide: Exoribonuclease 2 (644 aa).

The RNB domain maps to 189–516; it reads RQDLTALNFV…NHRLLKAVIK (328 aa). The region spanning 561-643 is the S1 motif domain; that stretch reads NTRFAAEIID…ETRSIIARPA (83 aa).

It belongs to the RNR ribonuclease family. RNase II subfamily.

The protein localises to the cytoplasm. It carries out the reaction Exonucleolytic cleavage in the 3'- to 5'-direction to yield nucleoside 5'-phosphates.. Its function is as follows. Involved in mRNA degradation. Hydrolyzes single-stranded polyribonucleotides processively in the 3' to 5' direction. In Salmonella paratyphi B (strain ATCC BAA-1250 / SPB7), this protein is Exoribonuclease 2.